We begin with the raw amino-acid sequence, 461 residues long: Proton extrusion protein PxcA (461 aa).

4 helical membrane-spanning segments follow: residues 244–264 (FMLL…ALIV), 339–359 (LKNI…VFTG), 386–406 (IILF…EVLV), and 421–441 (FINM…KYWI).

It belongs to the CemA family.

It localises to the cell inner membrane. In terms of biological role, required for H(+) efflux immediately after light irradiation to form a rapid H(+) concentration gradient across the thylakoid membranes. Together with PxcL, contributes to transient H(+) uptake following dark to light transition. The polypeptide is Proton extrusion protein PxcA (Thermosynechococcus vestitus (strain NIES-2133 / IAM M-273 / BP-1)).